The sequence spans 35 residues: Potassium channel toxin (35 aa).

Disulfide bonds link Cys-6–Cys-25, Cys-11–Cys-30, and Cys-15–Cys-32.

The protein belongs to the short scorpion toxin superfamily. Potassium channel inhibitor family. Alpha-KTx 21 subfamily. In terms of tissue distribution, expressed by the venom gland.

Its subcellular location is the secreted. Functionally, toxin that blocks voltage-gated potassium channels (Kv). The sequence is that of Potassium channel toxin from Tityus metuendus (Scorpion).